Reading from the N-terminus, the 135-residue chain is Large ribosomal subunit protein uL18 (135 aa).

The tract at residues 1-23 (MAQTQADTAARKPVGQSVSATRR) is disordered.

It belongs to the universal ribosomal protein uL18 family. Part of the 50S ribosomal subunit; part of the 5S rRNA/L5/L18/L25 subcomplex. Contacts the 5S and 23S rRNAs.

This is one of the proteins that bind and probably mediate the attachment of the 5S RNA into the large ribosomal subunit, where it forms part of the central protuberance. This Mycobacterium marinum (strain ATCC BAA-535 / M) protein is Large ribosomal subunit protein uL18.